The chain runs to 124 residues: Putative transmembrane protein FLJ36131 (124 aa).

Topologically, residues M1–Y2 are cytoplasmic. The chain crosses the membrane as a helical span at residues V3–I23. Over V24–S124 the chain is Extracellular. N-linked (GlcNAc...) asparagine glycosylation occurs at N41.

Its subcellular location is the membrane. This Homo sapiens (Human) protein is Putative transmembrane protein FLJ36131.